A 333-amino-acid chain; its full sequence is D-alanine--D-alanine ligase (333 aa).

The ATP-grasp domain occupies 124-329 (KMWFSALGIR…FAQYLSGNIM (206 aa)). An ATP-binding site is contributed by 154–209 (ALEKWGSIFIKAASQGSSVGCYRVDNKEQLANSLEEAFKYSPYVVVEKTINARELE). D283, E296, and N298 together coordinate Mg(2+).

Belongs to the D-alanine--D-alanine ligase family. It depends on Mg(2+) as a cofactor. Mn(2+) is required as a cofactor.

It is found in the cytoplasm. It carries out the reaction 2 D-alanine + ATP = D-alanyl-D-alanine + ADP + phosphate + H(+). It functions in the pathway cell wall biogenesis; peptidoglycan biosynthesis. In terms of biological role, cell wall formation. In Shewanella halifaxensis (strain HAW-EB4), this protein is D-alanine--D-alanine ligase.